We begin with the raw amino-acid sequence, 272 residues long: Glutamate racemase (272 aa).

Substrate is bound by residues 10–11 (DS) and 42–43 (YG). Cys-73 acts as the Proton donor/acceptor in catalysis. 74–75 (NT) contacts substrate. Cys-183 (proton donor/acceptor) is an active-site residue. 184–185 (TH) is a binding site for substrate.

The protein belongs to the aspartate/glutamate racemases family.

It carries out the reaction L-glutamate = D-glutamate. It participates in cell wall biogenesis; peptidoglycan biosynthesis. Provides the (R)-glutamate required for cell wall biosynthesis. This chain is Glutamate racemase, found in Leifsonia xyli subsp. xyli (strain CTCB07).